The chain runs to 156 residues: Small ribosomal subunit protein uS7 (156 aa).

Belongs to the universal ribosomal protein uS7 family. In terms of assembly, part of the 30S ribosomal subunit. Contacts proteins S9 and S11.

Functionally, one of the primary rRNA binding proteins, it binds directly to 16S rRNA where it nucleates assembly of the head domain of the 30S subunit. Is located at the subunit interface close to the decoding center, probably blocks exit of the E-site tRNA. The sequence is that of Small ribosomal subunit protein uS7 from Acinetobacter baylyi (strain ATCC 33305 / BD413 / ADP1).